Here is a 524-residue protein sequence, read N- to C-terminus: Tissue-resident T-cell transcription regulator protein ZNF683 (524 aa).

Residues asparagine 130–glycine 142 are compositionally biased toward basic and acidic residues. 2 disordered regions span residues asparagine 130–serine 166 and glutamine 265–glutamine 303. C2H2-type zinc fingers lie at residues tyrosine 322–histidine 344 and phenylalanine 350–histidine 372. A C2H2-type 3; degenerate zinc finger spans residues arginine 398–histidine 420. Residues phenylalanine 426–histidine 448 form a C2H2-type 4 zinc finger.

It belongs to the krueppel C2H2-type zinc-finger protein family. In terms of tissue distribution, expressed in terminally differentiated effector CD8(+) T-cells, but not in naive and central memory cells. Expressed in terminally differentiated natural killer (NK) cells and natural killer (NKT) T-cells (at protein level). Expressed strongly in effector-type CD8(+) T-cells and weakly in naive and memory CD8(+) T-cells. Expressed in terminally differentiated natural killer (NK) cells. Isoform 2 is strongly expressed in effector CD8(+) T and natural killer (NK) cells. Isoform 1 is expressed in effector CD8(+) T and natural killer (NK) cells. (Microbial infection) Expressed in cytomegalovirus (CMV)-infected effector CD8(+) T-cells (at protein level).

It is found in the nucleus. In terms of biological role, transcription factor that mediates a transcriptional program in various innate and adaptive immune tissue-resident lymphocyte T-cell types such as tissue-resident memory T (Trm), natural killer (trNK) and natural killer T (NKT) cells and negatively regulates gene expression of proteins that promote the egress of tissue-resident T-cell populations from non-lymphoid organs. Plays a role in the development, retention and long-term establishment of adaptive and innate tissue-resident lymphocyte T cell types in non-lymphoid organs, such as the skin and gut, but also in other nonbarrier tissues like liver and kidney, and therefore may provide immediate immunological protection against reactivating infections or viral reinfection. Also plays a role in the differentiation of both thymic and peripheral NKT cells. Negatively regulates the accumulation of interferon-gamma (IFN-gamma) in NKT cells at steady state or after antigenic stimulation. Positively regulates granzyme B production in NKT cells after innate stimulation. Associates with the transcriptional repressor PRDM1/BLIMP1 to chromatin at gene promoter regions. Functionally, lacks transcriptional repressor activity. Binds to DNA within promoter regions of the transcriptional repressor PRDM1/BLIMP1 target sites. Unable to regulate interferon-gamma (IFN-gamma) production in cytomegalovirus (CMV)-infected effector CD8(+) T-cells. Transcriptional repressor that binds to DNA within promoter regions of the transcriptional repressor PRDM1/BLIMP1 target sites. Regulates interferon-gamma (IFN-gamma) production in cytomegalovirus (CMV)-infected effector CD8(+) T cells. The polypeptide is Tissue-resident T-cell transcription regulator protein ZNF683 (Homo sapiens (Human)).